The primary structure comprises 278 residues: Protein lyl-1 (278 aa).

Residues 1–46 are disordered; the sequence is MCPPQARAEVGSAMTEKTEMVCASSPAPAPPSKPASPGPLSTEEVD. Residues 27-37 show a composition bias toward pro residues; that stretch reads APAPPSKPASP. In terms of domain architecture, bHLH spans 149 to 201; it reads ARRVFTNSRERWRQQHVNGAFAELRKLLPTHPPDRKLSKNEVLRLAMKYIGFL. The disordered stretch occupies residues 212–278; sequence LTSGPSAPGS…EQTSLSPEVR (67 aa). A compositionally biased stretch (polar residues) spans 269–278; the sequence is EQTSLSPEVR. S274 bears the Phosphoserine mark.

Efficient DNA binding requires dimerization with another bHLH protein.

It is found in the nucleus. The protein is Protein lyl-1 (Lyl1) of Mus musculus (Mouse).